A 366-amino-acid chain; its full sequence is NADH-quinone oxidoreductase subunit D (366 aa).

It belongs to the complex I 49 kDa subunit family. NDH-1 is composed of 14 different subunits. Subunits NuoB, C, D, E, F, and G constitute the peripheral sector of the complex.

It is found in the cell membrane. The enzyme catalyses a quinone + NADH + 5 H(+)(in) = a quinol + NAD(+) + 4 H(+)(out). NDH-1 shuttles electrons from NADH, via FMN and iron-sulfur (Fe-S) centers, to quinones in the respiratory chain. The immediate electron acceptor for the enzyme in this species is believed to be a menaquinone. Couples the redox reaction to proton translocation (for every two electrons transferred, four hydrogen ions are translocated across the cytoplasmic membrane), and thus conserves the redox energy in a proton gradient. This chain is NADH-quinone oxidoreductase subunit D, found in Desulforamulus reducens (strain ATCC BAA-1160 / DSM 100696 / MI-1) (Desulfotomaculum reducens).